A 461-amino-acid chain; its full sequence is tRNA modification GTPase MnmE (461 aa).

Residues Arg21, Glu87, and Lys126 each coordinate (6S)-5-formyl-5,6,7,8-tetrahydrofolate. The 163-residue stretch at 222–384 folds into the TrmE-type G domain; the sequence is QSTVVLYGEP…LLELLKSKLT (163 aa). Asn232 contacts K(+). GTP is bound by residues 232 to 237, 251 to 257, and 276 to 279; these read NTGKSS, SDVPGTT, and DTAG. Ser236 provides a ligand contact to Mg(2+). K(+) is bound by residues Ser251, Val253, and Thr256. Mg(2+) is bound at residue Thr257. Lys461 lines the (6S)-5-formyl-5,6,7,8-tetrahydrofolate pocket.

The protein belongs to the TRAFAC class TrmE-Era-EngA-EngB-Septin-like GTPase superfamily. TrmE GTPase family. In terms of assembly, homodimer. Heterotetramer of two MnmE and two MnmG subunits. It depends on K(+) as a cofactor.

It localises to the cytoplasm. Functionally, exhibits a very high intrinsic GTPase hydrolysis rate. Involved in the addition of a carboxymethylaminomethyl (cmnm) group at the wobble position (U34) of certain tRNAs, forming tRNA-cmnm(5)s(2)U34. The protein is tRNA modification GTPase MnmE of Leptospira biflexa serovar Patoc (strain Patoc 1 / Ames).